Here is a 65-residue protein sequence, read N- to C-terminus: Large ribosomal subunit protein bL35 (65 aa).

It belongs to the bacterial ribosomal protein bL35 family.

This is Large ribosomal subunit protein bL35 from Thermotoga neapolitana (strain ATCC 49049 / DSM 4359 / NBRC 107923 / NS-E).